A 533-amino-acid chain; its full sequence is GMP synthase [glutamine-hydrolyzing] (533 aa).

Residues 22 to 215 (RILILDFGSQ…THNVAGCSGT (194 aa)) enclose the Glutamine amidotransferase type-1 domain. The active-site Nucleophile is Cys99. Catalysis depends on residues His189 and Glu191. The GMPS ATP-PPase domain maps to 216–408 (WTMAGFRELE…LGIPESIVGR (193 aa)). 243–249 (SGGVDSS) contributes to the ATP binding site.

As to quaternary structure, homodimer.

The enzyme catalyses XMP + L-glutamine + ATP + H2O = GMP + L-glutamate + AMP + diphosphate + 2 H(+). It participates in purine metabolism; GMP biosynthesis; GMP from XMP (L-Gln route): step 1/1. Functionally, catalyzes the synthesis of GMP from XMP. In Gluconobacter oxydans (strain 621H) (Gluconobacter suboxydans), this protein is GMP synthase [glutamine-hydrolyzing].